Consider the following 156-residue polypeptide: Succinate dehydrogenase assembly factor 2-B, mitochondrial (156 aa).

The transit peptide at 1–24 (MLRQFIISTVGRRQPLLMILQSRL) directs the protein to the mitochondrion.

Belongs to the SDHAF2 family. In terms of assembly, interacts with the flavoprotein subunit within the SDH catalytic dimer.

The protein resides in the mitochondrion matrix. Plays an essential role in the assembly of succinate dehydrogenase (SDH), an enzyme complex (also referred to as respiratory complex II) that is a component of both the tricarboxylic acid (TCA) cycle and the mitochondrial electron transport chain, and which couples the oxidation of succinate to fumarate with the reduction of ubiquinone (coenzyme Q) to ubiquinol. Required for flavinylation (covalent attachment of FAD) of the flavoprotein subunit of the SDH catalytic dimer. In Drosophila yakuba (Fruit fly), this protein is Succinate dehydrogenase assembly factor 2-B, mitochondrial.